We begin with the raw amino-acid sequence, 354 residues long: GTPase Obg (354 aa).

The region spanning 1–159 (MQFIDHAEIE…KQLRLELKLL (159 aa)) is the Obg domain. Residues 160–328 (AEVGIIGLPN…LLQEIWDVLD (169 aa)) enclose the OBG-type G domain. Residues 166 to 173 (GLPNAGKS), 191 to 195 (FTTLI), 213 to 216 (DIPG), 280 to 283 (NKLD), and 309 to 311 (SAV) each bind GTP. S173 and T193 together coordinate Mg(2+).

The protein belongs to the TRAFAC class OBG-HflX-like GTPase superfamily. OBG GTPase family. As to quaternary structure, monomer. The cofactor is Mg(2+).

It is found in the cytoplasm. Its function is as follows. An essential GTPase which binds GTP, GDP and possibly (p)ppGpp with moderate affinity, with high nucleotide exchange rates and a fairly low GTP hydrolysis rate. Plays a role in control of the cell cycle, stress response, ribosome biogenesis and in those bacteria that undergo differentiation, in morphogenesis control. This Picosynechococcus sp. (strain ATCC 27264 / PCC 7002 / PR-6) (Agmenellum quadruplicatum) protein is GTPase Obg.